The chain runs to 393 residues: Cytotoxic and regulatory T-cell molecule (393 aa).

Positions 1 to 16 (MWWGALSLLFWVPVQA) are cleaved as a signal peptide. Residues 17-111 (AFLKMETVTV…SVKTKQVRVT (95 aa)) enclose the Ig-like V-type domain. Residues 17-289 (AFLKMETVTV…HTGLARRKSG (273 aa)) lie on the Extracellular side of the membrane. Intrachain disulfides connect Cys-36–Cys-96 and Cys-139–Cys-194. Residues Asn-85 and Asn-176 are each glycosylated (N-linked (GlcNAc...) asparagine). An Ig-like C2-type domain is found at 119–208 (PTVEALVLRR…EGLHGRKLVA (90 aa)). Residues 218 to 228 (DQETSDQETSD) show a composition bias toward acidic residues. Residues 218 to 280 (DQETSDQETS…GLSTEASAQH (63 aa)) are disordered. Residues 229–246 (APEQSSLSSQALQQPTST) show a composition bias toward low complexity. A compositionally biased stretch (polar residues) spans 247 to 256 (VSMMENSSIP). The segment covering 257-267 (ETDKEEKEHAT) has biased composition (basic and acidic residues). A compositionally biased stretch (polar residues) spans 270-280 (PGLSTEASAQH). A helical transmembrane segment spans residues 290-310 (ILLLTLVSFLIFILFIIVQLF). Over 311-393 (IMKLRKAHVV…KHSRVPESIV (83 aa)) the chain is Cytoplasmic. A disordered region spans residues 333-356 (ESYRSRSNNEETSSQENSSQAPQS). A compositionally biased stretch (low complexity) spans 342–352 (EETSSQENSSQ). The short motif at 390-393 (ESIV) is the PDZ-binding element.

Belongs to the nectin family. In terms of assembly, monomer. May form homodimer (via Ig-like V-type domain). Interacts (via Ig-like V-type domain) with CADM1 (via Ig-like V-type domain); the interaction competes with CRTAM homodimerization and CADM1 homodimerization. Interacts (via PDZ-binding motif) with SCRIB (via PDZ domain 3); the interaction promotes CRTAM and SCRIB polarization in a subset of CD4+ T-cells. In terms of tissue distribution, in the immune system, expression is restricted to activated class-I MHC-restricted cells, including NKT, NK and CD8+ T-cells (at protein level). Transiently expressed in activated CD8+ T-cells and a subset of activated CD4+ T-cells (at protein level). Expressed in activated intestinal T-cells, specifically intraepithelial CD4+ CD8+ T-cells, intraepithelial CD4+ T-cells and, CD8+ T-cells in the intestine epithelium, lamina propria, Peyer's Patches and mesenteric lymph nodes. Also expressed in spleen, brain and testis.

The protein localises to the cell membrane. Its function is as follows. Mediates heterophilic cell-cell adhesion which regulates the activation, differentiation and tissue retention of various T-cell subsets. Interaction with CADM1 promotes natural killer (NK) cell cytotoxicity and IFNG/interferon-gamma secretion by CD8+ T-cells in vitro as well as NK cell-mediated rejection of tumors expressing CADM1 in vivo. Regulates CD8+ T-cell proliferation in response to T-cell receptor (TCR) activation. Appears to be dispensable for CD8+ T-cell-mediated cytotoxicity. Interaction with SCRIB promotes the late phase of cellular polarization of a subset of CD4+ T-cells, which in turn regulates TCR-mediated proliferation and IFNG, IL17 and IL22 production. By interacting with CADM1 on CD8+ dendritic cells, regulates the retention of activated CD8+ T-cells within the draining lymph node. Required for the intestinal retention of intraepithelial CD4+ CD8+ T-cells and, to a lesser extent, intraepithelial and lamina propria CD8+ T-cells and CD4+ T-cells. Interaction with CADM1 promotes the adhesion to gut-associated CD103+ dendritic cells, which may facilitate the expression of gut-homing and adhesion molecules on T-cells and the conversion of CD4+ T-cells into CD4+ CD8+ T-cells. This is Cytotoxic and regulatory T-cell molecule from Mus musculus (Mouse).